A 413-amino-acid chain; its full sequence is Probable tRNA pseudouridine synthase D (413 aa).

Catalysis depends on Asp97, which acts as the Nucleophile. Residues 167 to 370 (AAPNYYGYQR…YGTYRRVRLE (204 aa)) form the TRUD domain.

This sequence belongs to the pseudouridine synthase TruD family.

The enzyme catalyses uridine(13) in tRNA = pseudouridine(13) in tRNA. Functionally, could be responsible for synthesis of pseudouridine from uracil-13 in transfer RNAs. The polypeptide is Probable tRNA pseudouridine synthase D (Pyrobaculum aerophilum (strain ATCC 51768 / DSM 7523 / JCM 9630 / CIP 104966 / NBRC 100827 / IM2)).